The following is a 741-amino-acid chain: MGKPPGARNPAEAEADGDDAVFLELSRELKEEGTRLFNRRDFEGAAFKYDKAVQLLPAGRRVEAAHLRASIAHCYMRMSPAEFHHAIHECNLALEAVPRYSRALLRRAACFEALGRPDLAWGDIRTVLRWEPGNRAARQISDRVRTALEDKGISVALDVLPEDENEIASAKGEERKKSRNKRFDSVAGGREGENGIALLESASTEKQAGPRQTNGTGNHQDHTEDSESNGLEKLEQSTETGEKDMGKKRGAHAAGKKPRCGESKQQKHSAVNHCQDNIGAKEEVMKDVKLVFGEDIRCAQMPANCSLPQLREIVQNKFPSLKAFLIKYKDKEEDLVTITLSEELSWASNLAVSQVPIRFYVVEVNHVQELGVDGVRRRPSFATLERNRDIMLDNGTIGHDVEHKHYADDWMVQFAQIFKNHVGFSSDAYLDLHDLGLRLHYEAMEDTIQREEAQEIFEVAESKFKEMAALALFNCGNVHMSRARRRPCLAEDPLQEFILEKVNVSYDWACTEYAKAGAMFEEAVKTKSDFFEGLIALGQQKFEQAKLSWYYALACKINMETEVLELFNHAEDNMEKGMDMWERMETLRLKGLSKPSKEKVVLEKMVLEGFVKDISADEAFEQASSIRSHINILWGTILYERSVVEFNLGLPSWEESLTVAMEKFKIGGASQADINVIVKNHCANETTQEGLSFKVEEIVQAWSEMHDAKNWRSGPLYFRLQPVFRRRAPKLHHILEHMHYA.

3 TPR repeats span residues 26–59 (SRELKEEGTRLFNRRDFEGAAFKYDKAVQLLPAG), 65–100 (AHLRASIAHCYMRMSPAEFHHAIHECNLALEAVPRY), and 102–134 (RALLRRAACFEALGRPDLAWGDIRTVLRWEPGN). A disordered region spans residues 168–270 (ASAKGEERKK…GESKQQKHSA (103 aa)). Residues 171-184 (KGEERKKSRNKRFD) show a composition bias toward basic and acidic residues. Positions 201 to 218 (SASTEKQAGPRQTNGTGN) are enriched in polar residues. Over residues 219 to 247 (HQDHTEDSESNGLEKLEQSTETGEKDMGK) the composition is skewed to basic and acidic residues. Over residues 248-258 (KRGAHAAGKKP) the composition is skewed to basic residues. Residues 285–364 (MKDVKLVFGE…VPIRFYVVEV (80 aa)) enclose the PB1 domain. TPR repeat units lie at residues 496-530 (EFILEKVNVSYDWACTEYAKAGAMFEEAVKTKSDF), 532-557 (EGLIALGQQKFEQAKLSWYYALACKI), 558-591 (NMETEVLELFNHAEDNMEKGMDMWERMETLRLKG), and 628-663 (SHINILWGTILYERSVVEFNLGLPSWEESLTVAMEK).

Interacts (via C-terminus) with O1. Interacts (via C-terminus) with OP10 (via N-terminus).

Its function is as follows. Acts as a co-chaperone for HSP90 and is required for proper folding of the myosin motor domain. This chain is HSP-interacting protein, found in Zea mays (Maize).